Here is a 430-residue protein sequence, read N- to C-terminus: Target of rapamycin complex 1 subunit toc1 (430 aa).

Ser-204 and Ser-399 each carry phosphoserine.

As to quaternary structure, the target of rapamycin complex 1 (TORC1) is composed of at least mip1, pop3/wat1, tco89, toc1 and tor2.

The protein resides in the cytoplasm. Its function is as follows. Component of TORC1, which regulates multiple cellular processes to control cell growth in response to environmental signals. Tor2 is essential for growth. Nutrient limitation and environmental stress signals cause inactivation of TORC1. Active TORC1 positively controls cell growth and ribosome biogenesis by regulating ribosomal protein gene expression. TORC1 negatively controls G1 cell-cycle arrest, sexual development and amino acid uptake. Represses mating, meiosis and sporulation efficiency by interfering with the functions of the transcription factor ste11 and the meiosis-promoting RNA-binding protein mei2. This is Target of rapamycin complex 1 subunit toc1 from Schizosaccharomyces pombe (strain 972 / ATCC 24843) (Fission yeast).